We begin with the raw amino-acid sequence, 209 residues long: Probable nicotinate-nucleotide adenylyltransferase (209 aa).

Belongs to the NadD family.

The catalysed reaction is nicotinate beta-D-ribonucleotide + ATP + H(+) = deamido-NAD(+) + diphosphate. It participates in cofactor biosynthesis; NAD(+) biosynthesis; deamido-NAD(+) from nicotinate D-ribonucleotide: step 1/1. Functionally, catalyzes the reversible adenylation of nicotinate mononucleotide (NaMN) to nicotinic acid adenine dinucleotide (NaAD). The protein is Probable nicotinate-nucleotide adenylyltransferase of Hydrogenovibrio crunogenus (strain DSM 25203 / XCL-2) (Thiomicrospira crunogena).